Consider the following 269-residue polypeptide: Aquaporin-1 (269 aa).

The Cytoplasmic segment spans residues 1-11 (MASEFKKKLFW). The helical transmembrane segment at 12-29 (RAVVAEFLAMTLFVFISI) threads the bilayer. The Extracellular portion of the chain corresponds to 30-46 (GSALGFKYPVGNNQTAV). N-linked (GlcNAc...) asparagine glycosylation is present at Asn42. Residues 47–65 (QDNVKVSLAFGLSIATLAQ) traverse the membrane as a helical segment. Over 66–68 (SVG) the chain is Cytoplasmic. An intramembrane segment occupies 69-82 (HISGAHLNPAVTLG). Positions 76–78 (NPA) match the NPA 1 motif. The Cytoplasmic portion of the chain corresponds to 83 to 90 (LLLSCQIS). Residues 91–109 (IFRALMYIIAQCVGAIVAT) traverse the membrane as a helical segment. Topologically, residues 110-133 (AILSGITSSLPGNSLGRNDLADGV) are extracellular. The helical transmembrane segment at 134 to 153 (NSGQGLGIEIIGTLQLVLCV) threads the bilayer. Over 154 to 163 (LATTDRRRRD) the chain is Cytoplasmic. A helical transmembrane segment spans residues 164 to 181 (LGGSAPLAIGLSVALGHL). Topologically, residues 182-186 (LAIDY) are extracellular. The stretch at 187–199 (TGCGINPARSFGS) is an intramembrane region. An NPA 2 motif is present at residues 192-194 (NPA). Topologically, residues 200 to 206 (AVITHNF) are extracellular. Asn205 carries an N-linked (GlcNAc...) asparagine glycan. The helical transmembrane segment at 207–224 (SNHWIFWVGPFIGGALAV) threads the bilayer. Residues 225–269 (LIYDFILAPRSSDFTDRVKVWTSGQVEEYDLDADDINSRVEMKPK) lie on the Cytoplasmic side of the membrane. Ser247 carries the phosphoserine modification. Tyr253 is subject to Phosphotyrosine. The residue at position 262 (Ser262) is a Phosphoserine.

This sequence belongs to the MIP/aquaporin (TC 1.A.8) family. As to quaternary structure, homotetramer; each monomer provides an independent water pore. Component of the ankyrin-1 complex in the erythrocyte, composed of ANK1, RHCE, RHAG, SLC4A1, EPB42, GYPA, GYPB and AQP1. Interacts with EPHB2; involved in endolymph production in the inner ear. Identified in a complex with STOM. Interacts (via the N-terminal) with ANK1 (via ANK 1-5 repeats). Interacts (via the C-terminal) with EPB42.

The protein localises to the cell membrane. It carries out the reaction H2O(in) = H2O(out). The enzyme catalyses nitric oxide(out) = nitric oxide(in). It catalyses the reaction CO2(out) = CO2(in). The catalysed reaction is glycerol(in) = glycerol(out). It carries out the reaction H2O2(out) = H2O2(in). The enzyme catalyses K(+)(in) = K(+)(out). It catalyses the reaction Na(+)(in) = Na(+)(out). Its function is as follows. Forms a water channel that facilitates the transport of water across cell membranes, playing a crucial role in water homeostasis in various tissues. Could also be permeable to small solutes including hydrogen peroxide, glycerol and gases such as amonnia (NH3), nitric oxide (NO) and carbon dioxide (CO2). Recruited to the ankyrin-1 complex, a multiprotein complex of the erythrocyte membrane, it could be part of a CO2 metabolon, linking facilitated diffusion of CO2 across the membrane, anion exchange of Cl(-)/HCO3(-) and interconversion of dissolved CO2 and carbonic acid in the cytosol. In vitro, it shows non-selective gated cation channel activity and may be permeable to cations like K(+) and Na(+) in vivo. The sequence is that of Aquaporin-1 from Pongo abelii (Sumatran orangutan).